A 286-amino-acid chain; its full sequence is Pheromone receptor transcription factor (286 aa).

S2 carries the N-acetylserine modification. Position 2 is a phosphoserine (S2). The 55-residue stretch at 18–72 (RRKIEIKFIENKTRRHVTFSKRKHGIMKKAFELSVLTGTQVLLLVVSETGLVYTF) folds into the MADS-box domain. A compositionally biased stretch (acidic residues) spans 97–119 (PDDEEEDEEEDGDDDDDDDDDGN). Residues 97 to 137 (PDDEEEDEEEDGDDDDDDDDDGNDMQRQQPQQQQPQQQQQV) are disordered. A compositionally biased stretch (low complexity) spans 122–136 (QRQQPQQQQPQQQQQ). Position 144 is a phosphoserine (S144). The interval 167–264 (LGGANPNQNS…QQAFANAASP (98 aa)) is disordered. The segment covering 171 to 246 (NPNQNSMIQQ…QQQQQQQQQP (76 aa)) has biased composition (low complexity).

Homodimer. Binds DNA with a high specificity in complex with mating-type protein ALPHA1. Also binds DNA with a high specificity as a heterotetramer consisting of an ALPHA2 dimer and an MCM1 dimer. Interacts with YHP1 and YOX1, possibly leading to its inactivation. Interacts with ARG80 and ARG82.

It localises to the nucleus. Transcription factor required for the efficient replication of minichromosomes and the transcriptional regulation of early cell cycle genes. Activates transcription of ECB-dependent genes during the G1/M phase. Genes that contain a ECB (early cell box) element in their transcription regulatory region are transcribed only during G1/M phases. Interacts with the alpha-2 repressor or with the alpha-1 activator thereby regulating the expression of mating-type-specific genes. With ARG80, ARG81 and ARG82, coordinates the expression of arginine anabolic and catabolic genes in response to arginine. The sequence is that of Pheromone receptor transcription factor (MCM1) from Saccharomyces cerevisiae (strain ATCC 204508 / S288c) (Baker's yeast).